Reading from the N-terminus, the 515-residue chain is GMP synthase [glutamine-hydrolyzing] (515 aa).

In terms of domain architecture, Glutamine amidotransferase type-1 spans 6 to 198 (KVIILDFGSQ…VFKVAGLKAD (193 aa)). Cys-83 acts as the Nucleophile in catalysis. Active-site residues include His-172 and Glu-174. The GMPS ATP-PPase domain occupies 199–390 (WTMSSFVENC…LGLPEFIIWR (192 aa)). 226 to 232 (SGGIDST) contacts ATP.

Homodimer.

It catalyses the reaction XMP + L-glutamine + ATP + H2O = GMP + L-glutamate + AMP + diphosphate + 2 H(+). It participates in purine metabolism; GMP biosynthesis; GMP from XMP (L-Gln route): step 1/1. Its function is as follows. Catalyzes the synthesis of GMP from XMP. The chain is GMP synthase [glutamine-hydrolyzing] from Maridesulfovibrio salexigens (strain ATCC 14822 / DSM 2638 / NCIMB 8403 / VKM B-1763) (Desulfovibrio salexigens).